The primary structure comprises 231 residues: LexA repressor (231 aa).

A DNA-binding region (H-T-H motif) is located at residues 28–48; the sequence is IREIGEALDIRSTNGVNDHLK. Residues serine 149 and lysine 186 each act as for autocatalytic cleavage activity in the active site.

This sequence belongs to the peptidase S24 family. In terms of assembly, homodimer.

It carries out the reaction Hydrolysis of Ala-|-Gly bond in repressor LexA.. In terms of biological role, represses a number of genes involved in the response to DNA damage (SOS response), including recA and lexA. In the presence of single-stranded DNA, RecA interacts with LexA causing an autocatalytic cleavage which disrupts the DNA-binding part of LexA, leading to derepression of the SOS regulon and eventually DNA repair. The polypeptide is LexA repressor (Anaeromyxobacter sp. (strain Fw109-5)).